The sequence spans 257 residues: Pyridoxine/pyridoxamine 5'-phosphate oxidase (257 aa).

Arg33–Tyr36 provides a ligand contact to substrate. Arg90 to Leu93 provides a ligand contact to FMN. Pyridoxal 5'-phosphate is bound at residue Lys95. FMN contacts are provided by residues Tyr105–Thr106 and Lys112. The pyridoxal 5'-phosphate site is built by Tyr152, Arg156, and Ser160. Residues Gln169–Ser170 and Trp216 contribute to the FMN site. Substrate is bound at residue Arg222 to His224. Arg226 provides a ligand contact to FMN.

Belongs to the pyridoxamine 5'-phosphate oxidase family. In terms of assembly, homodimer. FMN serves as cofactor. Expressed in silk gland and fat body of the larva.

It carries out the reaction pyridoxamine 5'-phosphate + O2 + H2O = pyridoxal 5'-phosphate + H2O2 + NH4(+). The catalysed reaction is pyridoxine 5'-phosphate + O2 = pyridoxal 5'-phosphate + H2O2. Its pathway is cofactor metabolism; pyridoxal 5'-phosphate salvage; pyridoxal 5'-phosphate from pyridoxamine 5'-phosphate: step 1/1. It functions in the pathway cofactor metabolism; pyridoxal 5'-phosphate salvage; pyridoxal 5'-phosphate from pyridoxine 5'-phosphate: step 1/1. Functionally, catalyzes the oxidation of either pyridoxine 5'-phosphate (PNP) or pyridoxamine 5'-phosphate (PMP) into pyridoxal 5'-phosphate (PLP). This is Pyridoxine/pyridoxamine 5'-phosphate oxidase from Bombyx mori (Silk moth).